The following is a 416-amino-acid chain: CinA-like protein (416 aa).

The protein belongs to the CinA family.

This Trichormus variabilis (strain ATCC 29413 / PCC 7937) (Anabaena variabilis) protein is CinA-like protein.